The chain runs to 489 residues: Mitochondrial distribution and morphology protein 12 (489 aa).

The SMP-LTD domain occupies M1–V489. Acidic residues predominate over residues E72–H82. Disordered regions lie at residues E72 to D97, W201 to R313, and D394 to R432. Positions L231–L249 are enriched in polar residues. Composition is skewed to low complexity over residues S250 to N265 and Q398 to E424.

The protein belongs to the MDM12 family. In terms of assembly, component of the ER-mitochondria encounter structure (ERMES) or MDM complex, composed of MMM1, MDM10, mdm12 and MDM34. An MMM1 homodimer associates with one molecule of mdm12 on each side in a pairwise head-to-tail manner, and the SMP-LTD domains of MMM1 and mdm12 generate a continuous hydrophobic tunnel for phospholipid trafficking.

Its subcellular location is the mitochondrion outer membrane. The protein resides in the endoplasmic reticulum membrane. Component of the ERMES/MDM complex, which serves as a molecular tether to connect the endoplasmic reticulum (ER) and mitochondria. Components of this complex are involved in the control of mitochondrial shape and protein biogenesis, and function in nonvesicular lipid trafficking between the ER and mitochondria. mdm12 is required for the interaction of the ER-resident membrane protein MMM1 and the outer mitochondrial membrane-resident beta-barrel protein MDM10. The mdm12-MMM1 subcomplex functions in the major beta-barrel assembly pathway that is responsible for biogenesis of all mitochondrial outer membrane beta-barrel proteins, and acts in a late step after the SAM complex. The MDM10-mdm12-MMM1 subcomplex further acts in the TOM40-specific pathway after the action of the mdm12-MMM1 complex. Essential for establishing and maintaining the structure of mitochondria and maintenance of mtDNA nucleoids. The protein is Mitochondrial distribution and morphology protein 12 of Talaromyces marneffei (strain ATCC 18224 / CBS 334.59 / QM 7333) (Penicillium marneffei).